A 495-amino-acid polypeptide reads, in one-letter code: Potassium voltage-gated channel subfamily A member 1 (495 aa).

The tract at residues 1–30 is disordered; sequence MTVMSGENADEASAAPGHPQDGSYPRQADH. The interval 1–128 is tetramerization domain; it reads MTVMSGENAD…FYELGEEAME (128 aa). Residues 1 to 164 are Cytoplasmic-facing; it reads MTVMSGENAD…LLFEYPESSG (164 aa). Ser23 carries the phosphoserine modification. Residues 165-186 traverse the membrane as a helical segment; that stretch reads PARVIAIVSVMVILISIVIFCL. Residues 187 to 220 are Extracellular-facing; the sequence is ETLPELKDDKDFTGTIHRIDNTTVIYTSNIFTDP. N-linked (GlcNAc...) asparagine glycosylation occurs at Asn207. A helical transmembrane segment spans residues 221-242; that stretch reads FFIVETLCIIWFSFELVVRFFA. Cys243 carries the S-palmitoyl cysteine lipid modification. Residues 243–253 lie on the Cytoplasmic side of the membrane; that stretch reads CPSKTDFFKNI. Residues 254–274 form a helical membrane-spanning segment; that stretch reads MNFIDIVAIIPYFITLGTEIA. Over 275-287 the chain is Extracellular; that stretch reads EQEGNQKGEQATS. A helical; Voltage-sensor membrane pass occupies residues 288–308; that stretch reads LAILRVIRLVRVFRIFKLSRH. Topologically, residues 309–323 are cytoplasmic; sequence SKGLQILGQTLKASM. Positions 310-323 are S4-S5 linker; it reads KGLQILGQTLKASM. Ser322 is subject to Phosphoserine; by PKA. The chain crosses the membrane as a helical span at residues 324–345; it reads RELGLLIFFLFIGVILFSSAVY. Topologically, residues 346-359 are extracellular; it reads FAEAEEAESHFSSI. An intramembrane region (helical) is located at residues 360-371; that stretch reads PDAFWWAVVSMT. Positions 372 to 377 match the Selectivity filter motif; sequence TVGYGD. Residues 372-379 lie within the membrane without spanning it; that stretch reads TVGYGDMY. Topologically, residues 380 to 386 are extracellular; it reads PVTIGGK. Residues 387 to 415 traverse the membrane as a helical segment; that stretch reads IVGSLCAIAGVLTIALPVPVIVSNFNYFY. At 416-495 the chain is on the cytoplasmic side; it reads HRETEGEEQA…VNKSKLLTDV (80 aa). A phosphoserine mark is found at Ser437 and Ser439. At Ser446 the chain carries Phosphoserine; by PKA. Positions 493–495 match the PDZ-binding motif; that stretch reads TDV.

It belongs to the potassium channel family. A (Shaker) (TC 1.A.1.2) subfamily. Kv1.1/KCNA1 sub-subfamily. In terms of assembly, homotetramer and heterotetramer with other channel-forming alpha subunits, such as KCNA2, KCNA4, KCNA5, KCNA6 and KCNA7. Channel activity is regulated by interaction with the beta subunits KCNAB1 and KCNAB2. Identified in a complex with KCNA2 and KCNAB2. Interacts (via C-terminus) with the PDZ domains of DLG1, DLG2 and DLG4. Interacts with LGI1 within a complex containing LGI1, KCNA4 and KCNAB1. Interacts (via cytoplasmic N-terminal domain) with KCNRG; this inhibits channel activity. Interacts with ANK3; this inhibits channel activity. Interacts (via N-terminus) with STX1A; this promotes channel inactivation. Interacts (via N-terminus) with the heterodimer formed by GNB1 and GNG2; this promotes channel inactivation. Can interact simultaneously with STX1A and the heterodimer formed by GNB1 and GNG2. Interacts with ADAM11. In terms of processing, palmitoylated on Cys-243; which may be required for membrane targeting. N-glycosylated. Post-translationally, phosphorylated on tyrosine residues. Phosphorylation increases in response to NRG1; this inhibits channel activity. Phosphorylated by PKA. Phosphorylation at Ser-446 regulates channel activity by down-regulating expression at the cell membrane. In terms of tissue distribution, detected in hippocampus, in the middle third of the molecular layer of the dentate gyrus and in stratum radiatum and stratum oriens. Detected in the mossy fiber zone in the hippocampus CA3 region, at or near axon terminals. Detected in brain cortex, at basket cell terminals. Detected adjacent to nodes of Ranvier in juxtaparanodal zones in spinal cord nerve fibers, but also in paranodal regions in some myelinated spinal cord axons. Detected in juxtaparanodal regions adjacent to the nodes of Ranvier in myelinated axons in cerebellar white matter. Detected in sensory neurons. Detected in neurons from the medial nucleus of the trapezoid body. Detected in basolateral amygdala. Detected in the paraventricular nucleus of the hypothalamus. Detected in the islet of Langerhans (at protein level).

The protein localises to the cell membrane. It is found in the membrane. The protein resides in the cell projection. It localises to the axon. Its subcellular location is the cytoplasmic vesicle. The protein localises to the perikaryon. It is found in the endoplasmic reticulum. The protein resides in the dendrite. It localises to the cell junction. Its subcellular location is the synapse. The protein localises to the presynapse. It is found in the presynaptic cell membrane. The catalysed reaction is K(+)(in) = K(+)(out). Its activity is regulated as follows. Inhibited by 4-aminopyridine (4-AP) and by tetraethylammonium (TEA). Inhibited by kaliotoxin (KTX). In terms of biological role, voltage-gated potassium channel that mediates transmembrane potassium transport in excitable membranes, primarily in the brain and the central nervous system, but also in the kidney. Contributes to the regulation of the membrane potential and nerve signaling, and prevents neuronal hyperexcitability. Forms tetrameric potassium-selective channels through which potassium ions pass in accordance with their electrochemical gradient. The channel alternates between opened and closed conformations in response to the voltage difference across the membrane. Can form functional homotetrameric channels and heterotetrameric channels that contain variable proportions of KCNA1, KCNA2, KCNA4, KCNA5, KCNA6, KCNA7, and possibly other family members as well; channel properties depend on the type of alpha subunits that are part of the channel. Channel properties are modulated by cytoplasmic beta subunits that regulate the subcellular location of the alpha subunits and promote rapid inactivation of delayed rectifier potassium channels. In vivo, membranes probably contain a mixture of heteromeric potassium channel complexes, making it difficult to assign currents observed in intact tissues to any particular potassium channel family member. Homotetrameric KCNA1 forms a delayed-rectifier potassium channel that opens in response to membrane depolarization, followed by slow spontaneous channel closure. In contrast, a heterotetrameric channel formed by KCNA1 and KCNA4 shows rapid inactivation. Regulates neuronal excitability in hippocampus, especially in mossy fibers and medial perforant path axons, preventing neuronal hyperexcitability. Response to toxins that are selective for KCNA1, respectively for KCNA2, suggests that heteromeric potassium channels composed of both KCNA1 and KCNA2 play a role in pacemaking and regulate the output of deep cerebellar nuclear neurons. May function as down-stream effector for G protein-coupled receptors and inhibit GABAergic inputs to basolateral amygdala neurons. May contribute to the regulation of neurotransmitter release, such as gamma-aminobutyric acid (GABA) release. Plays a role in regulating the generation of action potentials and preventing hyperexcitability in myelinated axons of the vagus nerve, and thereby contributes to the regulation of heart contraction. Required for normal neuromuscular responses. Regulates the frequency of neuronal action potential firing in response to mechanical stimuli, and plays a role in the perception of pain caused by mechanical stimuli, but does not play a role in the perception of pain due to heat stimuli. Required for normal responses to auditory stimuli and precise location of sound sources, but not for sound perception. The use of toxins that block specific channels suggest that it contributes to the regulation of the axonal release of the neurotransmitter dopamine. Required for normal postnatal brain development and normal proliferation of neuronal precursor cells in the brain. Plays a role in the reabsorption of Mg(2+) in the distal convoluted tubules in the kidney and in magnesium ion homeostasis, probably via its effect on the membrane potential. This is Potassium voltage-gated channel subfamily A member 1 from Rattus norvegicus (Rat).